The chain runs to 547 residues: MDDSRVQLWVKTDPFLLGALQIPPPEKFSMHYLRKMATYVRTRASEGCYPRLCWCMWRHIACGKLQILEETAWLYFETFLSVFERSVAESLNWAEVASTCPSSEKYEEVKSKLSVDTLKFMLFLYIQQINKISLRSPLIGNEWPSPRGRSPISDFAAQSSFYNKVWDDYSHYNFIHNHLTYILELLMEPNQLSKVSQFSHCILISAEVVTALGFVIEGTVDKNRVVNAFLDLAIWQPVQIKSGFIETLGSFSFQKLQAWIKECLVINPFGITSCIKSGTKLSWAQQVDGLNKRAKVACNTYKVPHTHRMVVMSQISKQTLAKSSKTLVDARVKIHRCSDCYIYLLSPLRSVTVEKCQNCTIVLGPVQTVLHIQMCYNVKIIAVCQRLSLLSTTNCTFHVLTPTRPLFYCGNQGVVLAPFHISYSMLEDHMAHTGLATVPNSWDRPFFFSTESSNSHIWRLLLPEEFFTFVVPFEMEGDTTEIPGGLPPAYSTSVQQRQQKIRMWQETVKDAGLTREQRKQLQAVVEMKFNEWLIKTENRHQLDSLVS.

The C-CAP/cofactor C-like domain maps to 304–435; sequence PHTHRMVVMS…LEDHMAHTGL (132 aa).

It belongs to the TBCC family.

Its subcellular location is the cytoplasm. The protein resides in the cytoskeleton. It localises to the microtubule organizing center. It is found in the centrosome. The protein localises to the spindle pole. May play a role in the regulation of centrosome and Golgi apparatus positioning. This is TBCC domain-containing protein 1 (tbccd1) from Xenopus tropicalis (Western clawed frog).